A 939-amino-acid chain; its full sequence is MGQACGHSILCRSQQYPAARPAEPRGQQVFLKPDEPPPQPCADSLQDALLSLGAVIDIAGLRQAARDALSAVLPKVETVYTYLLDGESRLVCEDPPHELPQEGKIREAVISQKRLSCNGLGPSDLLGKPLARLVAPLAPDMQVLVIPLLDKETGSVAAVILVHCGQLSDSEEQSLQVVEKHALVALRRVQALQQRRPEAVQNTSVDASEDQKDEKGYTDHDRKILQLCGELFDLDATSLQLKVLQYLQQETQATHCCLLLVSEDNLQLSCKVIGDKVLGEEVSFPLTMGRLGQVVEDKQCIQLKDLTSDDVQQLQNMLGCELQAMLCVPVISRATDQVVALACAFNKLGGDFPTSSFTDEDEHVIQHCFHYTGTVLTSTLAFQKEQKLKCECQALLQVAKNLFTHLDDVSVLLQEIITEARNLSNAEICSVFLLDQNELVAKVFDGGVVDDESYEIRIPADQGIAGHVATTGQILNIPDAYAHPLFYRGVDDSTGFRTRNILCFPIKNENQEVIGVAELVNKINGPWFSKFDEDLATAFSIYCGISIAHSLLYKKVNEAQYRSHLANEMMMYHMKVSDDEYTKLLHDGIQPVAAIDSNFANFTYTPRSLPEDDTSMAILSMLQDMNFINNYKIDCPTLARFCLMVKKGYRDPPYHNWMHAFSVSHFCYLLYKNLELSNYLEDIEIFALFISCMCHDLDHRGTNNSFQVASKSVLAALYSSEGSVMERHHFAQAIAILNTHGCNIFDHFSRKDYQRMLDLMRDIILATDLAHHLRIFKDLQKMAEVGYDRNNRQHHRLLLCLLMTSCDLSDQTKGWKTTRKIAELIYKEFFSQGDLEKAMGNRPMEMMDREKAYIPELQISFMEHIAMPIYKLLQDLFPKAAELYERVASNREHWTKVSHKFTIRGLPSNNSLDFLDEEYEVPDLDGTRAPVNGCCSLEG.

Gly2 is lipidated: N-myristoyl glycine. S-palmitoyl cysteine attachment occurs at residues Cys5 and Cys11. Positions Tyr16–Pro38 are disordered. Ser116 is subject to Phosphoserine. The interval Pro197 to Tyr217 is disordered. GAF domains lie at Ala236–Gly373 and Asp408–Ile547. 3',5'-cyclic GMP-binding residues include Ser430, Asp445, Ile464, Tyr487, and Thr498. One can recognise a PDEase domain in the interval Ser577–Phe901. The active-site Proton donor is the His655. Zn(2+) contacts are provided by His659, His695, Asp696, and Asp807. Residue Asp696 coordinates Mg(2+).

This sequence belongs to the cyclic nucleotide phosphodiesterase family. PDE2 subfamily. In terms of assembly, homodimer. It depends on Zn(2+) as a cofactor. Mg(2+) is required as a cofactor. In terms of tissue distribution, expressed in brain and liver (at protein level).

The protein resides in the cytoplasm. Its subcellular location is the mitochondrion matrix. The protein localises to the mitochondrion inner membrane. It localises to the mitochondrion outer membrane. It is found in the cell membrane. It catalyses the reaction a nucleoside 3',5'-cyclic phosphate + H2O = a nucleoside 5'-phosphate + H(+). The catalysed reaction is 3',5'-cyclic GMP + H2O = GMP + H(+). It carries out the reaction 3',5'-cyclic AMP + H2O = AMP + H(+). With respect to regulation, the 3',5'-cyclic-AMP phosphodiesterase activity is stimulated by 3',5'-cyclic GMP. Specifically inhibited by Bay 60-7550. CGMP-activated cyclic nucleotide phosphodiesterase with a dual-specificity for the second messengers cAMP and cGMP, which are key regulators of many important physiological processes. Has a higher efficiency with cGMP compared to cAMP. Plays a role in cell growth and migration. Its function is as follows. Regulates mitochondrial cAMP levels and respiration. Involved in the regulation of mitochondria morphology/dynamics and apoptotic cell death via local modulation of cAMP/PKA signaling in the mitochondrion, including the monitoring of local cAMP levels at the outer mitochondrial membrane and of PKA-dependent phosphorylation of DNM1L. The protein is cGMP-dependent 3',5'-cyclic phosphodiesterase of Mus musculus (Mouse).